Here is a 391-residue protein sequence, read N- to C-terminus: Trehalose-phosphate phosphatase (391 aa).

Asp-147 functions as the Nucleophile in the catalytic mechanism. The Mg(2+) site is built by Asp-147, Asp-149, and Asp-330. Residue 147–149 (DFD) coordinates substrate.

The protein belongs to the trehalose phosphatase family. Mg(2+) serves as cofactor.

It catalyses the reaction alpha,alpha-trehalose 6-phosphate + H2O = alpha,alpha-trehalose + phosphate. It functions in the pathway glycan biosynthesis; trehalose biosynthesis. Removes the phosphate from trehalose 6-phosphate to produce free trehalose. The sequence is that of Trehalose-phosphate phosphatase (otsB) from Mycobacterium avium (strain 104).